The following is a 44-amino-acid chain: MVQCVRHFVLPRLKKDAGLPFFFPLITHSQPLNRGAFFCLGVRR.

In Shigella flexneri, this protein is pyr operon leader peptide (pyrL).